We begin with the raw amino-acid sequence, 143 residues long: Spore coat protein P (143 aa).

The sHSP domain maps to Phe-34 to Leu-143.

Belongs to the small heat shock protein (HSP20) family.

This chain is Spore coat protein P (cotP), found in Bacillus subtilis (strain 168).